A 68-amino-acid chain; its full sequence is DNA-directed RNA polymerase subunit omega (68 aa).

The protein belongs to the RNA polymerase subunit omega family. In terms of assembly, the RNAP catalytic core consists of 2 alpha, 1 beta, 1 beta' and 1 omega subunit. When a sigma factor is associated with the core the holoenzyme is formed, which can initiate transcription.

It catalyses the reaction RNA(n) + a ribonucleoside 5'-triphosphate = RNA(n+1) + diphosphate. In terms of biological role, promotes RNA polymerase assembly. Latches the N- and C-terminal regions of the beta' subunit thereby facilitating its interaction with the beta and alpha subunits. The chain is DNA-directed RNA polymerase subunit omega from Alkaliphilus metalliredigens (strain QYMF).